We begin with the raw amino-acid sequence, 772 residues long: Annulin (772 aa).

Residues Cys-4 and Cys-5 are each lipidated (S-palmitoyl cysteine). Positions 15 to 57 (NEGSGGGIPLMPVRGGSTRRPDSLPKPPAAVVPSPPSPGDVPD) are disordered. Residues 38–53 (LPKPPAAVVPSPPSPG) show a composition bias toward pro residues. Catalysis depends on residues His-400 and Asp-427. The Ca(2+) site is built by Asn-467, Asp-469, Glu-517, and Glu-522.

The protein belongs to the transglutaminase superfamily. Transglutaminase family. Requires Ca(2+) as cofactor. Has an annular, or ring-like expression pattern in epithelial annuli of developing limb segment boundary cells. In embryos, it is seen in gastrulating cells, in cells surrounding rapidly dividing neuroblasts, and in muscle pioneer cells invaginating to form apodemes.

Its subcellular location is the cell membrane. It catalyses the reaction L-glutaminyl-[protein] + L-lysyl-[protein] = [protein]-L-lysyl-N(6)-5-L-glutamyl-[protein] + NH4(+). Functionally, participates in morphogenetic activities of the cells, maybe by stabilizing the membrane or subcortical structures of cells that are under mechanical stress. Probably catalyzes the cross-linking of proteins and the conjugation of polyamines to proteins. This is Annulin from Schistocerca americana (American grasshopper).